Reading from the N-terminus, the 445-residue chain is Phosphoglucosamine mutase (445 aa).

Ser-102 (phosphoserine intermediate) is an active-site residue. Mg(2+)-binding residues include Ser-102, Asp-240, Asp-242, and Asp-244. At Ser-102 the chain carries Phosphoserine.

The protein belongs to the phosphohexose mutase family. It depends on Mg(2+) as a cofactor. In terms of processing, activated by phosphorylation.

It carries out the reaction alpha-D-glucosamine 1-phosphate = D-glucosamine 6-phosphate. Catalyzes the conversion of glucosamine-6-phosphate to glucosamine-1-phosphate. The polypeptide is Phosphoglucosamine mutase (Mycobacterium sp. (strain JLS)).